The sequence spans 218 residues: Recombination protein RecR (218 aa).

The segment at 56–71 adopts a C4-type zinc-finger fold; it reads CRICCNISREEVCRIC. The 117-residue stretch at 79–195 folds into the Toprim domain; the sequence is STICVVEEPK…VVSRLASGMP (117 aa).

It belongs to the RecR family.

Its function is as follows. May play a role in DNA repair. It seems to be involved in an RecBC-independent recombinational process of DNA repair. It may act with RecF and RecO. The protein is Recombination protein RecR of Corynebacterium diphtheriae (strain ATCC 700971 / NCTC 13129 / Biotype gravis).